Reading from the N-terminus, the 149-residue chain is Small ribosomal subunit protein uS11z (149 aa).

The segment at Val130–Leu149 is disordered. The segment covering Arg140–Leu149 has biased composition (basic residues).

It belongs to the universal ribosomal protein uS11 family.

The polypeptide is Small ribosomal subunit protein uS11z (Zea mays (Maize)).